A 227-amino-acid chain; its full sequence is UPF0758 protein CPE2144 (227 aa).

An MPN domain is found at Lys105–Leu227. 3 residues coordinate Zn(2+): His176, His178, and Asp189. The short motif at His176–Asp189 is the JAMM motif element.

Belongs to the UPF0758 family.

The protein is UPF0758 protein CPE2144 of Clostridium perfringens (strain 13 / Type A).